The chain runs to 630 residues: Pentatricopeptide repeat-containing protein At1g26460, mitochondrial (630 aa).

The transit peptide at 1–115 directs the protein to the mitochondrion; it reads MASHLFTRSR…RALSETLDMN (115 aa). Residues 42–79 are disordered; that stretch reads LLATESTDHDPSNHQSTSTPLPPNPATGSPLYQENWRS. Positions 67 to 77 are enriched in polar residues; the sequence is ATGSPLYQENW. PPR repeat units follow at residues 154 to 189, 190 to 224, 227 to 261, 468 to 503, 504 to 538, and 539 to 573; these read DVNLYNHYLRANLMMGASAGDMLDLVAPMEEFSVEP, NTASYNLVLKAMYQARETEAAMKLLERMLLLGKDS, DDESYDLVIGMHFGVGKNDEAMKVMDTALKSGYML, SVAALNCIILGCANTWDLDRAYQTFEAISASFGLTP, NIDSYNALLYAFGKVKKTFEATNVFEHLVSIGVKP, and DSRTYSLLVDAHLINRDPKSALTVVDDMIKAGFEP.

Belongs to the PPR family. P subfamily.

The protein resides in the mitochondrion. The chain is Pentatricopeptide repeat-containing protein At1g26460, mitochondrial from Arabidopsis thaliana (Mouse-ear cress).